We begin with the raw amino-acid sequence, 28 residues long: U-actitoxin-Ate1 (28 aa).

An N-terminal signal peptide occupies residues M1–S15. The cysteines at positions 20 and 26 are disulfide-linked.

As to quaternary structure, monomer in solution. Post-translationally, may be N-glycosylated at Asn-22. Activity with this modification has not be tested. In terms of tissue distribution, highly expressed in the tentacles. Weakly expressed in acrorhagi and mesenteric filaments.

Its subcellular location is the secreted. The protein resides in the nematocyst. In terms of biological role, probable toxin expected to be employed in prey capture and/or defense against predators (based on its abundance in tentacles). Has only a weak affinity for lipid membranes. Shows moderate cytotoxic activity against breast cancer cell lines (MCF-7 and MDA-MB-231). This Actinia tenebrosa (Australian red waratah sea anemone) protein is U-actitoxin-Ate1.